The primary structure comprises 451 residues: SH2 domain-containing protein 7 (451 aa).

The SH2 domain occupies 51–142 (WFHGFITRKQ…PFKEMLTAAC (92 aa)). 3 disordered regions span residues 180–232 (KAAS…SLLE), 256–321 (LGTE…SDAM), and 408–436 (GTPELSEPGNTYEQIPATKSKETGRTHKP). Residues 221–232 (SPLPEKSSSLLE) show a composition bias toward low complexity. Residues 279–291 (EAQRRLSDGEQNR) show a composition bias toward basic and acidic residues. Residues 306–316 (QGPTESPTSWG) are compositionally biased toward polar residues. Residues 426-436 (KSKETGRTHKP) are compositionally biased toward basic and acidic residues.

This is SH2 domain-containing protein 7 (SH2D7) from Homo sapiens (Human).